A 115-amino-acid polypeptide reads, in one-letter code: DNA-directed RNA polymerase II subunit RPB11-b2 (115 aa).

The protein belongs to the archaeal Rpo11/eukaryotic RPB11/RPC19 RNA polymerase subunit family. As to quaternary structure, component of the RNA polymerase II (Pol II) complex consisting of 12 subunits.

Its subcellular location is the nucleus. Functionally, DNA-dependent RNA polymerase catalyzes the transcription of DNA into RNA using the four ribonucleoside triphosphates as substrates. Component of RNA polymerase II which synthesizes mRNA precursors and many functional non-coding RNAs. Pol II is the central component of the basal RNA polymerase II transcription machinery. It is composed of mobile elements that move relative to each other. RPB11 is part of the core element with the central large cleft. This chain is DNA-directed RNA polymerase II subunit RPB11-b2 (POLR2J3), found in Homo sapiens (Human).